The chain runs to 318 residues: uncharacterized protein (318 aa).

2 helical membrane-spanning segments follow: residues 230 to 250 (VWTYLGSIISLLSLAYASFLI) and 264 to 284 (ASLMVAILFLGGVQLISLGVI).

It belongs to the glycosyltransferase 2 family. GtrB subfamily.

Its subcellular location is the cell membrane. This is an uncharacterized protein from Synechocystis sp. (strain ATCC 27184 / PCC 6803 / Kazusa).